The chain runs to 304 residues: tRNA-5-methyluridine(54) 2-sulfurtransferase (304 aa).

Residues Cys-3, Cys-6, Cys-22, and His-25 each contribute to the Zn(2+) site. 2 residues coordinate ATP: Ala-53 and Ile-79. Positions 131 and 134 each coordinate [4Fe-4S] cluster. ATP is bound by residues Arg-138 and Gly-157. A [4Fe-4S] cluster-binding site is contributed by Cys-224. Zn(2+) contacts are provided by Cys-274, Cys-277, Cys-286, and Cys-289.

It belongs to the TtcA family. TtuA subfamily. As to quaternary structure, homodimer. Requires [4Fe-4S] cluster as cofactor. It depends on Mg(2+) as a cofactor.

It carries out the reaction 5-methyluridine(54) in tRNA + hydrogen sulfide + ATP = 5-methyl-2-thiouridine(54) in tRNA + AMP + diphosphate. The protein operates within tRNA modification. In terms of biological role, catalyzes the ATP-dependent 2-thiolation of 5-methyluridine residue at position 54 in the T loop of tRNAs, leading to 5-methyl-2-thiouridine (m(5)s(2)U or s(2)T). This modification allows thermal stabilization of tRNAs in thermophilic microorganisms, and is required for cell growth at high temperatures. Can use free sulfide as sulfur source in vitro. In Thermotoga maritima (strain ATCC 43589 / DSM 3109 / JCM 10099 / NBRC 100826 / MSB8), this protein is tRNA-5-methyluridine(54) 2-sulfurtransferase.